Consider the following 279-residue polypeptide: MAASSSLLLLLHCPTCNFYFDSSSYLKRSRLSSYSSIISRGSPLFVSSFGSMTVKRFSSRVGSRSNDGNEQFGALEQESFINNSSEIRKDLVTGGGIEAIVNRLSKWVVSVLFGSIILLRHDGAALWAVIGSISNSALSVVLKRILNQERPTTTLRSDPGMPSSHAQSISFISVFAVLSVMEWLGTNGVSLFLSGLILALGSYFIRLRVSQKLHTSSQVVVGAIVGSLFCILWYTMWNSLLREAFEASLLVQISVFLFAATFALAFAAYVVLNWFKDER.

A chloroplast-targeting transit peptide spans methionine 1 to arginine 88. 5 helical membrane passes run leucine 126 to leucine 142, serine 164 to leucine 184, glycine 185 to isoleucine 205, valine 219 to serine 239, and valine 255 to phenylalanine 275.

It belongs to the PA-phosphatase related phosphoesterase family. Expressed in root tips, root branch points, cotyledons and leaves.

It localises to the plastid. The protein resides in the chloroplast inner membrane. Its activity is regulated as follows. Inhibited by Mg(2+). Exhibits phosphatidate phosphatase (PAP) activity in vitro. May play a secondary role as PAP in plastids. This Arabidopsis thaliana (Mouse-ear cress) protein is Lipid phosphate phosphatase epsilon 1, chloroplastic (LPPE1).